Here is a 150-residue protein sequence, read N- to C-terminus: Large ribosomal subunit protein bL9 (150 aa).

It belongs to the bacterial ribosomal protein bL9 family.

Its function is as follows. Binds to the 23S rRNA. This is Large ribosomal subunit protein bL9 from Corynebacterium kroppenstedtii (strain DSM 44385 / JCM 11950 / CIP 105744 / CCUG 35717).